Consider the following 437-residue polypeptide: 3-phosphoshikimate 1-carboxyvinyltransferase (437 aa).

Residues Lys-21, Ser-22, and Arg-26 each contribute to the 3-phosphoshikimate site. Lys-21 lines the phosphoenolpyruvate pocket. The phosphoenolpyruvate site is built by Gly-101 and Arg-129. 3-phosphoshikimate contacts are provided by Ser-172, Ser-173, Gln-174, Ser-200, Asp-314, and Lys-341. Position 174 (Gln-174) interacts with phosphoenolpyruvate. Catalysis depends on Asp-314, which acts as the Proton acceptor. Residues Arg-345, Arg-388, and Lys-414 each contribute to the phosphoenolpyruvate site.

It belongs to the EPSP synthase family. Monomer.

Its subcellular location is the cytoplasm. The catalysed reaction is 3-phosphoshikimate + phosphoenolpyruvate = 5-O-(1-carboxyvinyl)-3-phosphoshikimate + phosphate. The protein operates within metabolic intermediate biosynthesis; chorismate biosynthesis; chorismate from D-erythrose 4-phosphate and phosphoenolpyruvate: step 6/7. Functionally, catalyzes the transfer of the enolpyruvyl moiety of phosphoenolpyruvate (PEP) to the 5-hydroxyl of shikimate-3-phosphate (S3P) to produce enolpyruvyl shikimate-3-phosphate and inorganic phosphate. The chain is 3-phosphoshikimate 1-carboxyvinyltransferase from Clostridioides difficile (strain 630) (Peptoclostridium difficile).